We begin with the raw amino-acid sequence, 220 residues long: MELNKYIDHTLLKPEAKSKDIDKLIDEAKKYNFKAICINSSWVKYAKEKLKDSDIKIASVIDFPFGAAITQAKVQEAKLAISHGASEIDMVMNIGKFKDGDYEYVLNDIKSVKKVMGSNILKVIIETALLNEKEIIKACQIVLNSGAEFVKTSTGYSYRGASESDIEIMKKTVGDKVLIKASGGIKNQESLKKMIELGSSRIGTSSSVALMENQEIKKGY.

The active-site Proton donor/acceptor is the D89. Residue K151 is the Schiff-base intermediate with acetaldehyde of the active site. The Proton donor/acceptor role is filled by K180.

Belongs to the DeoC/FbaB aldolase family. DeoC type 1 subfamily.

The protein localises to the cytoplasm. The enzyme catalyses 2-deoxy-D-ribose 5-phosphate = D-glyceraldehyde 3-phosphate + acetaldehyde. The protein operates within carbohydrate degradation; 2-deoxy-D-ribose 1-phosphate degradation; D-glyceraldehyde 3-phosphate and acetaldehyde from 2-deoxy-alpha-D-ribose 1-phosphate: step 2/2. Functionally, catalyzes a reversible aldol reaction between acetaldehyde and D-glyceraldehyde 3-phosphate to generate 2-deoxy-D-ribose 5-phosphate. This Mycoplasmopsis pulmonis (strain UAB CTIP) (Mycoplasma pulmonis) protein is Deoxyribose-phosphate aldolase.